A 179-amino-acid polypeptide reads, in one-letter code: uncharacterized protein (179 aa).

This is an uncharacterized protein from Bacillus subtilis (strain 168).